Here is a 598-residue protein sequence, read N- to C-terminus: Aspartate--tRNA(Asp/Asn) ligase (598 aa).

L-aspartate is bound at residue glutamate 172. The tract at residues 196–199 (QLFK) is aspartate. Arginine 218 provides a ligand contact to L-aspartate. Residues 218–220 (RDE) and glutamine 227 each bind ATP. An L-aspartate-binding site is contributed by histidine 454. Residue glutamate 488 participates in ATP binding. Arginine 495 is a binding site for L-aspartate. 540–543 (GLDR) contributes to the ATP binding site.

This sequence belongs to the class-II aminoacyl-tRNA synthetase family. Type 1 subfamily. As to quaternary structure, homodimer.

Its subcellular location is the cytoplasm. It catalyses the reaction tRNA(Asx) + L-aspartate + ATP = L-aspartyl-tRNA(Asx) + AMP + diphosphate. Aspartyl-tRNA synthetase with relaxed tRNA specificity since it is able to aspartylate not only its cognate tRNA(Asp) but also tRNA(Asn). Reaction proceeds in two steps: L-aspartate is first activated by ATP to form Asp-AMP and then transferred to the acceptor end of tRNA(Asp/Asn). The sequence is that of Aspartate--tRNA(Asp/Asn) ligase from Leptothrix cholodnii (strain ATCC 51168 / LMG 8142 / SP-6) (Leptothrix discophora (strain SP-6)).